The primary structure comprises 309 residues: HPr kinase/phosphorylase (309 aa).

Active-site residues include His138 and Lys159. Position 153–160 (153–160 (GDSGIGKS)) interacts with ATP. Ser160 is a binding site for Mg(2+). The active-site Proton acceptor; for phosphorylation activity. Proton donor; for dephosphorylation activity is the Asp177. The interval 201–210 (LEIRGVGIID) is important for the catalytic mechanism of both phosphorylation and dephosphorylation. Residue Glu202 participates in Mg(2+) binding. Residue Arg243 is part of the active site. The segment at 264–269 (PVKTGR) is important for the catalytic mechanism of dephosphorylation.

This sequence belongs to the HPrK/P family. In terms of assembly, homohexamer. Requires Mg(2+) as cofactor.

The catalysed reaction is [HPr protein]-L-serine + ATP = [HPr protein]-O-phospho-L-serine + ADP + H(+). The enzyme catalyses [HPr protein]-O-phospho-L-serine + phosphate + H(+) = [HPr protein]-L-serine + diphosphate. Its function is as follows. Catalyzes the ATP- as well as the pyrophosphate-dependent phosphorylation of a specific serine residue in HPr, a phosphocarrier protein of the phosphoenolpyruvate-dependent sugar phosphotransferase system (PTS). HprK/P also catalyzes the pyrophosphate-producing, inorganic phosphate-dependent dephosphorylation (phosphorolysis) of seryl-phosphorylated HPr (P-Ser-HPr). The two antagonistic activities of HprK/P are regulated by several intracellular metabolites, which change their concentration in response to the absence or presence of rapidly metabolisable carbon sources (glucose, fructose, etc.) in the growth medium. Therefore, by controlling the phosphorylation state of HPr, HPrK/P is a sensor enzyme that plays a major role in the regulation of carbon metabolism and sugar transport: it mediates carbon catabolite repression (CCR), and regulates PTS-catalyzed carbohydrate uptake and inducer exclusion. The sequence is that of HPr kinase/phosphorylase from Streptococcus thermophilus (strain CNRZ 1066).